A 170-amino-acid chain; its full sequence is Glycine cleavage system H protein, mitochondrial (170 aa).

The transit peptide at 1–47 (MLRTTRLWTTRMPTVSKLFLRNSSGNALNKNKLPFLYSSQGPQAVRY) directs the protein to the mitochondrion. Residues 61–143 (TAFVGITKYA…MGDGWLVKMK (83 aa)) enclose the Lipoyl-binding domain. Lysine 102 bears the N6-lipoyllysine mark.

The protein belongs to the GcvH family. In terms of assembly, component of the glycine decarboxylase complex (GDC), which is composed of four proteins: P, T, L and H. (R)-lipoate is required as a cofactor.

Its subcellular location is the mitochondrion. The glycine cleavage system (glycine decarboxylase complex) catalyzes the degradation of glycine. The H protein shuttles the methylamine group of glycine from the P protein to the T protein. This Saccharomyces cerevisiae (strain ATCC 204508 / S288c) (Baker's yeast) protein is Glycine cleavage system H protein, mitochondrial (GCV3).